Here is a 306-residue protein sequence, read N- to C-terminus: Agmatinase (306 aa).

Mn(2+)-binding residues include histidine 126, aspartate 149, histidine 151, aspartate 153, aspartate 230, and aspartate 232.

It belongs to the arginase family. Agmatinase subfamily. Requires Mn(2+) as cofactor.

The enzyme catalyses agmatine + H2O = urea + putrescine. It participates in amine and polyamine biosynthesis; putrescine biosynthesis via agmatine pathway; putrescine from agmatine: step 1/1. In terms of biological role, catalyzes the formation of putrescine from agmatine. The protein is Agmatinase of Shigella sonnei (strain Ss046).